The sequence spans 2156 residues: Probable capsid protein 3 (2156 aa).

The tract at residues 1319–1345 (NKSNKSNKSNESDKSSESDKSSESSNH) is disordered. Residues 1326 to 1345 (KSNESDKSSESDKSSESSNH) show a composition bias toward basic and acidic residues.

The protein belongs to the NCLDV major capsid protein family.

Its subcellular location is the virion. The polypeptide is Probable capsid protein 3 (Acanthamoeba polyphaga mimivirus (APMV)).